The following is a 135-amino-acid chain: D-ribose pyranase (135 aa).

Residue H20 is the Proton donor of the active site. Substrate is bound by residues D28, H102, and 124-126 (YSN).

The protein belongs to the RbsD / FucU family. RbsD subfamily. As to quaternary structure, homodecamer.

Its subcellular location is the cytoplasm. The catalysed reaction is beta-D-ribopyranose = beta-D-ribofuranose. It functions in the pathway carbohydrate metabolism; D-ribose degradation; D-ribose 5-phosphate from beta-D-ribopyranose: step 1/2. In terms of biological role, catalyzes the interconversion of beta-pyran and beta-furan forms of D-ribose. This chain is D-ribose pyranase, found in Thermotoga petrophila (strain ATCC BAA-488 / DSM 13995 / JCM 10881 / RKU-1).